A 32-amino-acid polypeptide reads, in one-letter code: Delta-conotoxin-like CnVIC (32 aa).

Disulfide bonds link Cys-3–Cys-18, Cys-10–Cys-22, and Cys-17–Cys-27. 4-hydroxyproline occurs at positions 6 and 14.

It belongs to the conotoxin O1 superfamily. Expressed by the venom duct.

The protein resides in the secreted. Functionally, delta-conotoxins bind to site 6 of voltage-gated sodium channels (Nav) and inhibit the inactivation process. This toxin acts on Nav1.2/SCN2A, Nav1.4/SCN4A, Nav1.5/SCN5A (weak activity), Nav1.6/SCN8A (EC(50)=2.5 uM). This chain is Delta-conotoxin-like CnVIC, found in Conus consors (Singed cone).